The following is a 493-amino-acid chain: Ectonucleoside triphosphate diphosphohydrolase 8 (493 aa).

Residues 1–7 are Cytoplasmic-facing; the sequence is MEYKGKV. A helical transmembrane segment spans residues 8 to 28; that stretch reads VAGLLTATCVFSIIALILSAV. Residues 29–463 lie on the Extracellular side of the membrane; sequence DVKDVFLPPG…ALEHVKGHEP (435 aa). 3 N-linked (GlcNAc...) asparagine glycosylation sites follow: Asn65, Asn79, and Asn133. A disulfide bond links Cys76 and Cys100. Glu166 functions as the Proton acceptor in the catalytic mechanism. N-linked (GlcNAc...) asparagine glycosylation is found at Asn223, Asn234, Asn267, Asn324, Asn330, Asn361, Asn372, Asn382, and Asn445. Cys244 and Cys291 are disulfide-bonded. Cys327 and Cys333 form a disulfide bridge. Cys379 and Cys401 are joined by a disulfide. Residues 464–486 form a helical membrane-spanning segment; sequence SLWAGAISFIVLAIVAGLVAILL. Residues 487-493 are Cytoplasmic-facing; it reads QCFWKSK.

The protein belongs to the GDA1/CD39 NTPase family. Ca(2+) serves as cofactor. The cofactor is Mg(2+). N-glycosylated.

The protein resides in the cell membrane. The enzyme catalyses a ribonucleoside 5'-triphosphate + 2 H2O = a ribonucleoside 5'-phosphate + 2 phosphate + 2 H(+). Canalicular ectonucleoside NTPDase responsible for the main hepatic NTPDase activity. Ectonucleoside ATPases catalyze the hydrolysis of gamma- and beta-phosphate residues of nucleotides, playing a central role in concentration of extracellular nucleotides. This chain is Ectonucleoside triphosphate diphosphohydrolase 8 (ENTPD8), found in Gallus gallus (Chicken).